Consider the following 153-residue polypeptide: Peptide methionine sulfoxide reductase MsrA (153 aa).

Cysteine 10 is a catalytic residue.

Belongs to the MsrA Met sulfoxide reductase family.

It catalyses the reaction L-methionyl-[protein] + [thioredoxin]-disulfide + H2O = L-methionyl-(S)-S-oxide-[protein] + [thioredoxin]-dithiol. The catalysed reaction is [thioredoxin]-disulfide + L-methionine + H2O = L-methionine (S)-S-oxide + [thioredoxin]-dithiol. Functionally, has an important function as a repair enzyme for proteins that have been inactivated by oxidation. Catalyzes the reversible oxidation-reduction of methionine sulfoxide in proteins to methionine. This chain is Peptide methionine sulfoxide reductase MsrA, found in Methanococcoides burtonii (strain DSM 6242 / NBRC 107633 / OCM 468 / ACE-M).